A 440-amino-acid polypeptide reads, in one-letter code: GFKAGVKDYKLTYYTPEYETKDTDILAAFRVTPQPGVPPEEAGAAVAAESSTGTWTTVWTDGLTSLDRYKGRCYHIEPVVGEENQYIAYVAYPLDLFEEGSVTNMFTSIVGNVFGFKALRALRLEDLRIPTTYSKTFLGPPHGIQVERDKLNKYGRPFLGCTIKPKLGLSAKNYGRACYECLRGGLDFTKDDENVNSQPFXRWRDRXVFCAEAXYKAQAETGEIKGHYLNATAGTCEEMIKRAVFARELGAPIVMHDYLTGGFTANTSLAHYCRDNGLLLHIHRAMHAVIDRQKNHGMHFRVLAKALRMSGGDHIHAGTVVGKLEGEREMTLGFVDLLRDDFIEKDRARGIFFTQDWVSMPGVIPVASGGIHVWHMPALTEIFGDDSVLQFGGGTLGHPWXNAPGAAANRVALEACVQARNEGRDLAREGNEIIRAACKW.

At K3 the chain carries N6,N6,N6-trimethyllysine. Residues N112 and T162 each contribute to the substrate site. K164 serves as the catalytic Proton acceptor. K166 lines the substrate pocket. K190, D192, and E193 together coordinate Mg(2+). Residue K190 is modified to N6-carboxylysine. The active-site Proton acceptor is H283. R284, H316, and S368 together coordinate substrate.

The protein belongs to the RuBisCO large chain family. Type I subfamily. As to quaternary structure, heterohexadecamer of 8 large chains and 8 small chains; disulfide-linked. The disulfide link is formed within the large subunit homodimers. Mg(2+) is required as a cofactor. Post-translationally, the disulfide bond which can form in the large chain dimeric partners within the hexadecamer appears to be associated with oxidative stress and protein turnover.

It localises to the plastid. It is found in the chloroplast. It catalyses the reaction 2 (2R)-3-phosphoglycerate + 2 H(+) = D-ribulose 1,5-bisphosphate + CO2 + H2O. The enzyme catalyses D-ribulose 1,5-bisphosphate + O2 = 2-phosphoglycolate + (2R)-3-phosphoglycerate + 2 H(+). RuBisCO catalyzes two reactions: the carboxylation of D-ribulose 1,5-bisphosphate, the primary event in carbon dioxide fixation, as well as the oxidative fragmentation of the pentose substrate in the photorespiration process. Both reactions occur simultaneously and in competition at the same active site. This Bambusa multiplex (Hedge bamboo) protein is Ribulose bisphosphate carboxylase large chain.